The chain runs to 266 residues: 4-hydroxy-tetrahydrodipicolinate reductase (266 aa).

10–15 (GPRGRM) contributes to the NAD(+) binding site. An NADP(+)-binding site is contributed by Lys38. Residues 99–101 (GTT) and 125–128 (APNF) contribute to the NAD(+) site. The Proton donor/acceptor role is filled by His155. Residue His156 coordinates (S)-2,3,4,5-tetrahydrodipicolinate. Lys159 acts as the Proton donor in catalysis. (S)-2,3,4,5-tetrahydrodipicolinate is bound at residue 165 to 166 (GT).

This sequence belongs to the DapB family.

It is found in the cytoplasm. The enzyme catalyses (S)-2,3,4,5-tetrahydrodipicolinate + NAD(+) + H2O = (2S,4S)-4-hydroxy-2,3,4,5-tetrahydrodipicolinate + NADH + H(+). The catalysed reaction is (S)-2,3,4,5-tetrahydrodipicolinate + NADP(+) + H2O = (2S,4S)-4-hydroxy-2,3,4,5-tetrahydrodipicolinate + NADPH + H(+). It functions in the pathway amino-acid biosynthesis; L-lysine biosynthesis via DAP pathway; (S)-tetrahydrodipicolinate from L-aspartate: step 4/4. In terms of biological role, catalyzes the conversion of 4-hydroxy-tetrahydrodipicolinate (HTPA) to tetrahydrodipicolinate. The sequence is that of 4-hydroxy-tetrahydrodipicolinate reductase from Bacillus anthracis (strain A0248).